We begin with the raw amino-acid sequence, 406 residues long: Cysteine desulfurase (406 aa).

Lysine 226 is modified (N6-(pyridoxal phosphate)lysine). The active-site Cysteine persulfide intermediate is the cysteine 364.

The protein belongs to the class-V pyridoxal-phosphate-dependent aminotransferase family. Csd subfamily. In terms of assembly, homodimer. Interacts with SufE and the SufBCD complex composed of SufB, SufC and SufD. The interaction with SufE is required to mediate the direct transfer of the sulfur atom from the S-sulfanylcysteine. Requires pyridoxal 5'-phosphate as cofactor.

It is found in the cytoplasm. The catalysed reaction is (sulfur carrier)-H + L-cysteine = (sulfur carrier)-SH + L-alanine. It carries out the reaction L-selenocysteine + AH2 = hydrogenselenide + L-alanine + A + H(+). It participates in cofactor biosynthesis; iron-sulfur cluster biosynthesis. Its function is as follows. Cysteine desulfurases mobilize the sulfur from L-cysteine to yield L-alanine, an essential step in sulfur metabolism for biosynthesis of a variety of sulfur-containing biomolecules. Component of the suf operon, which is activated and required under specific conditions such as oxidative stress and iron limitation. Acts as a potent selenocysteine lyase in vitro, that mobilizes selenium from L-selenocysteine. Selenocysteine lyase activity is however unsure in vivo. The chain is Cysteine desulfurase from Salmonella dublin (strain CT_02021853).